A 481-amino-acid polypeptide reads, in one-letter code: Beta-1,3-glucan-binding protein (481 aa).

The signal sequence occupies residues 1–17; that stretch reads MKVLVVFIFCLVRSTFG. Residues 19–123 enclose the CBM39 domain; it reads FEVPDALVEV…QKFVVKQLLD (105 aa). Residues 211–481 enclose the GH16 domain; that stretch reads HRLTIRPVPS…EVDYVKVSAL (271 aa). The N-linked (GlcNAc...) asparagine glycan is linked to N467.

Belongs to the insect beta-1,3-glucan binding protein family. The N-terminus is blocked. As to expression, hemolymph.

The protein resides in the secreted. Functionally, involved in the recognition of invading microorganisms. Binds specifically to beta-1,3-glucan and activates the phenoloxidase cascade. The polypeptide is Beta-1,3-glucan-binding protein (GRP) (Tenebrio molitor (Yellow mealworm beetle)).